A 150-amino-acid polypeptide reads, in one-letter code: UPF0756 membrane protein HI_1074 (150 aa).

The next 4 helical transmembrane spans lie at 1–21 (MTLQLNTIALLLVILLILGVL), 52–72 (YGVKIGIIILTIGVLSPLVSG), 81–101 (GFLSWKMALSISVGVLVAWLA), and 123–143 (IIGVAFLGGIPVGPLIAAGIL).

It belongs to the UPF0756 family.

Its subcellular location is the cell membrane. This chain is UPF0756 membrane protein HI_1074, found in Haemophilus influenzae (strain ATCC 51907 / DSM 11121 / KW20 / Rd).